The following is a 181-amino-acid chain: Caltractin ICL1a (181 aa).

The segment at 1–29 (MARRGQQPPPQQAPPAQKNQPGKFNPAEF) is disordered. Low complexity predominate over residues 14–23 (PPAQKNQPGK). EF-hand domains follow at residues 37–72 (EEVL…LGFE), 73–108 (AKNQ…RISE), 110–145 (DSKA…LGET), and 146–181 (MDDS…KTFA). 10 residues coordinate Ca(2+): Asp-50, Asp-52, Thr-54, Ser-56, Glu-61, Asp-86, Asp-88, Ser-90, Gln-92, and Glu-97.

Belongs to the centrin family. In terms of assembly, monomer.

Its subcellular location is the cytoplasm. The protein localises to the cytoskeleton. Its function is as follows. Plays a fundamental role in microtubule organizing center structure and function. Component of the infraciliary lattice (ICL) and the ciliary basal bodies. The polypeptide is Caltractin ICL1a (Icl1a) (Paramecium tetraurelia).